The primary structure comprises 348 residues: MGYKISIDAMGGDNGLNTTIPAALEAVKKDSNLQIVLVGDHHKVKRALDRYSKVKKIKLPVLQRIAIHHASETVGMDESPSIAVRKKKDSSMRVAINLVKDGTVDACVSAGNTGALMATSKFVLKTVNGVDRPAIVYALPAFNRDTKQLSKTYMLDLGANVVCSSEQLFQFAIMGSILAASSKGLAEPRVSLLNIGEEEMKGLDNIKNASKLLQGCDFINYQGYIEGKHIFDDTTDVIVCDGFVGNVSLKTMEGSLRLIESLIKKSITETSLLMKIPVIMSLPLFKKMKKGMNLDSFNGASLLGLTGIVVKSHGSASANAFETAIYEAVKEIKHNIPKTIQESLEKVL.

It belongs to the PlsX family. Homodimer. Probably interacts with PlsY.

Its subcellular location is the cytoplasm. It catalyses the reaction a fatty acyl-[ACP] + phosphate = an acyl phosphate + holo-[ACP]. It participates in lipid metabolism; phospholipid metabolism. In terms of biological role, catalyzes the reversible formation of acyl-phosphate (acyl-PO(4)) from acyl-[acyl-carrier-protein] (acyl-ACP). This enzyme utilizes acyl-ACP as fatty acyl donor, but not acyl-CoA. The protein is Phosphate acyltransferase of Francisella philomiragia subsp. philomiragia (strain ATCC 25017 / CCUG 19701 / FSC 153 / O#319-036).